The primary structure comprises 158 residues: Heavy metal-associated isoprenylated plant protein 23 (158 aa).

The HMA domain occupies 31 to 94 (FQTVELKVRM…KAKATGKKAE (64 aa)). A metal cation is bound by residues cysteine 42 and cysteine 45. Cysteine 155 is subject to Cysteine methyl ester. A lipid anchor (S-farnesyl cysteine) is attached at cysteine 155. Positions 156–158 (SIM) are cleaved as a propeptide — removed in mature form.

This sequence belongs to the HIPP family. As to quaternary structure, interacts with ZHD11/HB29.

In terms of biological role, heavy-metal-binding protein. The protein is Heavy metal-associated isoprenylated plant protein 23 of Arabidopsis thaliana (Mouse-ear cress).